Reading from the N-terminus, the 473-residue chain is UDP-N-acetylmuramate--L-alanine ligase (473 aa).

An ATP-binding site is contributed by 123 to 129 (GTHGKTT).

This sequence belongs to the MurCDEF family.

It is found in the cytoplasm. The catalysed reaction is UDP-N-acetyl-alpha-D-muramate + L-alanine + ATP = UDP-N-acetyl-alpha-D-muramoyl-L-alanine + ADP + phosphate + H(+). It functions in the pathway cell wall biogenesis; peptidoglycan biosynthesis. Cell wall formation. In Marinomonas sp. (strain MWYL1), this protein is UDP-N-acetylmuramate--L-alanine ligase.